A 399-amino-acid chain; its full sequence is A-type ATP synthase subunit C (399 aa).

The protein belongs to the V-ATPase V0D/AC39 subunit family. The A-type ATPase is composed of subunits A(3), B(3), C, D, E(1 or 2), F, H(2), I and K(x).

The protein localises to the cell membrane. In terms of biological role, component of the A-type ATP synthase that produces ATP from ADP in the presence of a proton gradient across the membrane. This is A-type ATP synthase subunit C from Methanocaldococcus jannaschii (strain ATCC 43067 / DSM 2661 / JAL-1 / JCM 10045 / NBRC 100440) (Methanococcus jannaschii).